Consider the following 410-residue polypeptide: Translation initiation factor 2 subunit gamma (410 aa).

The tr-type G domain occupies 9–202 (QAEVNIGMVG…AIEEFIPTPK (194 aa)). Residues 18-25 (GHVDHGKT) form a G1 region. Residues D21, T25, G46, and T48 each coordinate Mg(2+). 21 to 26 (DHGKTT) provides a ligand contact to GTP. The tract at residues 46 to 50 (GITIK) is G2. 4 residues coordinate Zn(2+): C61, C64, C73, and C76. The tract at residues 90 to 93 (DAPG) is G3. Residues 145 to 148 (NKIE) and 180 to 182 (SAL) each bind GTP. The segment at 145 to 148 (NKIE) is G4. Residues 180–182 (SAL) form a G5 region.

This sequence belongs to the TRAFAC class translation factor GTPase superfamily. Classic translation factor GTPase family. EIF2G subfamily. Heterotrimer composed of an alpha, a beta and a gamma chain. Requires Mg(2+) as cofactor.

The enzyme catalyses GTP + H2O = GDP + phosphate + H(+). In terms of biological role, eIF-2 functions in the early steps of protein synthesis by forming a ternary complex with GTP and initiator tRNA. The polypeptide is Translation initiation factor 2 subunit gamma (Thermococcus kodakarensis (strain ATCC BAA-918 / JCM 12380 / KOD1) (Pyrococcus kodakaraensis (strain KOD1))).